Here is a 150-residue protein sequence, read N- to C-terminus: Protein E6 (150 aa).

Zinc fingers lie at residues cysteine 31–cysteine 67 and cysteine 104–cysteine 140.

This sequence belongs to the papillomaviridae E6 protein family. Forms homodimers. Interacts with ubiquitin-protein ligase UBE3A/E6-AP; this interaction stimulates UBE3A ubiquitin activity. Interacts with host TP53 and EP300; this interaction inhibits TP53 activity.

It localises to the host cytoplasm. The protein localises to the host nucleus. Functionally, plays a major role in the induction and maintenance of cellular transformation. E6 associates with host UBE3A/E6-AP ubiquitin-protein ligase and modulates its activity. Sequesters tumor suppressor TP53 in the host cytoplasm and modulates its activity by interacting with host EP300 that results in the reduction of TP53 acetylation and activation. In turn, apoptosis induced by DNA damage is inhibited. E6 also protects host keratinocytes from apoptosis by mediating the degradation of host BAK1. May also inhibit host immune response. The chain is Protein E6 from Pygmy chimpanzee papillomavirus type 1 (PCPV-1).